The chain runs to 359 residues: Phospho-N-acetylmuramoyl-pentapeptide-transferase (359 aa).

A run of 10 helical transmembrane segments spans residues 26–46 (TIYAAITALIICFLLGPWLIR), 75–95 (GGVLIIFAVVVSTLLWANLTI), 97–117 (YVWLVLMVTLGYGLIGFADDY), 134–154 (LACEVCIALLVSVVLYAKPGF), 166–186 (VLPDLGWGYIFLSTFIIVGAA), 197–217 (GLAIGPAITCFMTYLLFAYFA), 233–253 (GVGELSIFCGAIVGAGIGFLW), 261–281 (VFMGDTGSLSLGGALGCLAIV), 286–306 (ILLAIVGGIFVLETFSVIFQV), and 336–356 (KVIVRFWIISILLALLAISTL).

This sequence belongs to the glycosyltransferase 4 family. MraY subfamily. The cofactor is Mg(2+).

The protein localises to the cell inner membrane. The catalysed reaction is UDP-N-acetyl-alpha-D-muramoyl-L-alanyl-gamma-D-glutamyl-meso-2,6-diaminopimeloyl-D-alanyl-D-alanine + di-trans,octa-cis-undecaprenyl phosphate = di-trans,octa-cis-undecaprenyl diphospho-N-acetyl-alpha-D-muramoyl-L-alanyl-D-glutamyl-meso-2,6-diaminopimeloyl-D-alanyl-D-alanine + UMP. It functions in the pathway cell wall biogenesis; peptidoglycan biosynthesis. Its function is as follows. Catalyzes the initial step of the lipid cycle reactions in the biosynthesis of the cell wall peptidoglycan: transfers peptidoglycan precursor phospho-MurNAc-pentapeptide from UDP-MurNAc-pentapeptide onto the lipid carrier undecaprenyl phosphate, yielding undecaprenyl-pyrophosphoryl-MurNAc-pentapeptide, known as lipid I. The chain is Phospho-N-acetylmuramoyl-pentapeptide-transferase from Syntrophus aciditrophicus (strain SB).